The following is a 1583-amino-acid chain: Pentafunctional AROM polypeptide (1583 aa).

The interval 1–384 is 3-dehydroquinate synthase; that stretch reads MSNPTKISIL…YETRASVVAN (384 aa). Residues 44–46, 81–84, 114–116, and D119 each bind NAD(+); these read DTN, EVSK, and GGV. R130 is a binding site for 7-phospho-2-dehydro-3-deoxy-D-arabino-heptonate. Residue 139-140 participates in NAD(+) binding; that stretch reads TT. The 7-phospho-2-dehydro-3-deoxy-D-arabino-heptonate site is built by D146 and K152. K161 contacts NAD(+). N162 lines the 7-phospho-2-dehydro-3-deoxy-D-arabino-heptonate pocket. Residues 179–182 and N190 each bind NAD(+); that span reads FLET. E194 contributes to the Zn(2+) binding site. Residues 194 to 197 and K250 contribute to the 7-phospho-2-dehydro-3-deoxy-D-arabino-heptonate site; that span reads EVIK. Catalysis depends on E260, which acts as the Proton acceptor; for 3-dehydroquinate synthase activity. 7-phospho-2-dehydro-3-deoxy-D-arabino-heptonate is bound by residues 264–268 and H271; that span reads RNLLN. Residue H271 participates in Zn(2+) binding. Residue H275 is the Proton acceptor; for 3-dehydroquinate synthase activity of the active site. Positions 287 and 356 each coordinate 7-phospho-2-dehydro-3-deoxy-D-arabino-heptonate. Residue H287 coordinates Zn(2+). An EPSP synthase region spans residues 397–842; the sequence is VHPGVAQSSN…WDTLRQLFKV (446 aa). C824 acts as the For EPSP synthase activity in catalysis. The segment at 863 to 1055 is shikimate kinase; it reads NASIYIIGMR…KEKEHSFFAS (193 aa). 870–877 serves as a coordination point for ATP; that stretch reads GMRGAGKS. A 3-dehydroquinase region spans residues 1056–1276; the sequence is LTLPDLREAG…AAPGQLSATE (221 aa). The active-site Proton acceptor; for 3-dehydroquinate dehydratase activity is the H1179. The active-site Schiff-base intermediate with substrate; for 3-dehydroquinate dehydratase activity is K1207. The tract at residues 1289-1583 is shikimate dehydrogenase; that stretch reads PKKFAIFGSP…SARACSSPLI (295 aa).

The protein in the N-terminal section; belongs to the sugar phosphate cyclases superfamily. Dehydroquinate synthase family. It in the 2nd section; belongs to the EPSP synthase family. In the 3rd section; belongs to the shikimate kinase family. This sequence in the 4th section; belongs to the type-I 3-dehydroquinase family. The protein in the C-terminal section; belongs to the shikimate dehydrogenase family. Homodimer. Zn(2+) is required as a cofactor.

It is found in the cytoplasm. The enzyme catalyses 7-phospho-2-dehydro-3-deoxy-D-arabino-heptonate = 3-dehydroquinate + phosphate. It catalyses the reaction 3-dehydroquinate = 3-dehydroshikimate + H2O. It carries out the reaction shikimate + NADP(+) = 3-dehydroshikimate + NADPH + H(+). The catalysed reaction is shikimate + ATP = 3-phosphoshikimate + ADP + H(+). The enzyme catalyses 3-phosphoshikimate + phosphoenolpyruvate = 5-O-(1-carboxyvinyl)-3-phosphoshikimate + phosphate. It functions in the pathway metabolic intermediate biosynthesis; chorismate biosynthesis; chorismate from D-erythrose 4-phosphate and phosphoenolpyruvate: step 2/7. The protein operates within metabolic intermediate biosynthesis; chorismate biosynthesis; chorismate from D-erythrose 4-phosphate and phosphoenolpyruvate: step 3/7. Its pathway is metabolic intermediate biosynthesis; chorismate biosynthesis; chorismate from D-erythrose 4-phosphate and phosphoenolpyruvate: step 4/7. It participates in metabolic intermediate biosynthesis; chorismate biosynthesis; chorismate from D-erythrose 4-phosphate and phosphoenolpyruvate: step 5/7. It functions in the pathway metabolic intermediate biosynthesis; chorismate biosynthesis; chorismate from D-erythrose 4-phosphate and phosphoenolpyruvate: step 6/7. In terms of biological role, the AROM polypeptide catalyzes 5 consecutive enzymatic reactions in prechorismate polyaromatic amino acid biosynthesis. The chain is Pentafunctional AROM polypeptide (aromA) from Emericella nidulans (strain FGSC A4 / ATCC 38163 / CBS 112.46 / NRRL 194 / M139) (Aspergillus nidulans).